The sequence spans 208 residues: Putative 3-methyladenine DNA glycosylase (208 aa).

It belongs to the DNA glycosylase MPG family.

This Lactobacillus johnsonii (strain CNCM I-12250 / La1 / NCC 533) protein is Putative 3-methyladenine DNA glycosylase.